We begin with the raw amino-acid sequence, 1353 residues long: Tenascin-R (1353 aa).

The signal sequence occupies residues 1-33 (MGTDSENPVLRNVLISFNLLLLGAVLKPFECRL). Residues 132–156 (SLQELLSRIEMLEREVSMLRDQCNS) adopt a coiled-coil conformation. Asn-179 and Asn-197 each carry an N-linked (GlcNAc...) asparagine glycan. 4 EGF-like domains span residues 187–198 (CICSEGWAGSNC), 234–260 (CPAG…GEDC), 265–291 (CPRD…GEDC), and 292–323 (GWLR…QDCS). Asn-277 carries an N-linked (GlcNAc...) asparagine glycan. 2 disulfides stabilise this stretch: Cys-296/Cys-306 and Cys-313/Cys-322. 9 consecutive Fibronectin type-III domains span residues 327-419 (PPEN…TPQG), 420-504 (LKFK…TLID), 505-594 (GPTQ…TEID), 595-686 (APKN…TELD), 687-776 (SPRD…VRPI), 777-863 (TQLH…TGMD), 864-952 (APKD…AMDA), 953-1037 (PLGV…TLLD), and 1038-1126 (PPTN…GGRV). N-linked (GlcNAc...) asparagine glycosylation is found at Asn-391, Asn-469, and Asn-580. N-linked (GlcNAc...) asparagine glycans are attached at residues Asn-734, Asn-790, Asn-872, Asn-1031, Asn-1041, Asn-1256, and Asn-1342. Positions 1124–1339 (GRVFANPQDC…FVEMKMRPYN (216 aa)) constitute a Fibrinogen C-terminal domain.

This sequence belongs to the tenascin family. As to quaternary structure, forms homodimers and homotrimers. Interacts with CNTN1, NFASC and CSPG5. Brain specific.

The protein localises to the secreted. It is found in the extracellular space. The protein resides in the extracellular matrix. In terms of biological role, neural extracellular matrix (ECM) protein involved in interactions with different cells and matrix components. Involved in cell attachment and neurite formation. Interaction with CNTN1 enhances the neurite outgrowth. The sequence is that of Tenascin-R (TNR) from Gallus gallus (Chicken).